The sequence spans 981 residues: Calsyntenin-1 (981 aa).

The N-terminal stretch at 1-28 (MLRRPAPALAPAARLLLAGLLCGGGVWA) is a signal peptide. Residues 29–859 (ARVNKHKPWL…PHPFAVVPST (831 aa)) are Extracellular-facing. Cadherin domains lie at 38-164 (LEPT…APVF) and 165-265 (KEKS…TPGW). N-linked (GlcNAc...) asparagine glycans are attached at residues N346, N366, and N515. Residues 860–880 (ATVVIVVCVSFLVFMIILGVF) form a helical membrane-spanning segment. At 881 to 981 (RIRAAHRRTM…LEWDDSTLSY (101 aa)) the chain is on the cytoplasmic side. The interval 915-981 (METYEDQHSS…LEWDDSTLSY (67 aa)) is disordered. The segment covering 925 to 960 (EEEEEEEEEEESEDGEEEDDITSAESESSEEEEGEQ) has biased composition (acidic residues). A compositionally biased stretch (polar residues) spans 962–981 (DPQNATRQQQLEWDDSTLSY).

This sequence belongs to the calsyntenin family. In terms of assembly, directly interacts with APBA2. Forms a tripartite complex with APBA2 and APP. Interacts with KLC1. As to quaternary structure, interacts with APBB1; this interaction stabilizes AlcICD metabolism. Interacts with PSEN1. Proteolytically processed under normal cellular conditions. A primary zeta-cleavage generates a large extracellular (soluble) N-terminal domain (sAlc) and a short C-terminal transmembrane fragment (CTF1). A secondary cleavage catalyzed by presenilin gamma-secretase within the transmembrane domain releases the beta-Alc-alpha chain in the extracellular milieu and produces an intracellular fragment (AlcICD). This processing is strongly suppressed in the tripartite complex formed with APBA2 and APP, which seems to prevent the association with PSEN1. As to expression, expressed in the brain and, a lower level, in the heart, skeletal muscle, kidney and placenta. Accumulates in dystrophic neurites around the amyloid core of Alzheimer disease senile plaques (at protein level).

Its subcellular location is the postsynaptic cell membrane. The protein localises to the endoplasmic reticulum membrane. It is found in the golgi apparatus membrane. The protein resides in the cell projection. It localises to the neuron projection. Its subcellular location is the nucleus. Its function is as follows. Postsynaptic adhesion molecule that binds to presynaptic neurexins to mediate both excitatory and inhibitory synapse formation. Promotes synapse development by acting as a cell adhesion molecule at the postsynaptic membrane, which associates with neurexin-alpha at the presynaptic membrane. Also functions as a cargo in axonal anterograde transport by acting as a molecular adapter that promotes KLC1 association with vesicles. Complex formation with APBA2 and APP, stabilizes APP metabolism and enhances APBA2-mediated suppression of beta-APP40 secretion, due to the retardation of intracellular APP maturation. Functionally, as intracellular fragment AlcICD, suppresses APBB1-dependent transactivation stimulated by APP C-terminal intracellular fragment (AICD), most probably by competing with AICD for APBB1-binding. In complex with APBA2 and C99, a C-terminal APP fragment, abolishes C99 interaction with PSEN1 and thus APP C99 cleavage by gamma-secretase, most probably through stabilization of the direct interaction between APBA2 and APP. In Homo sapiens (Human), this protein is Calsyntenin-1.